Here is a 157-residue protein sequence, read N- to C-terminus: 2-C-methyl-D-erythritol 2,4-cyclodiphosphate synthase (157 aa).

A divalent metal cation contacts are provided by aspartate 8 and histidine 10. 4-CDP-2-C-methyl-D-erythritol 2-phosphate is bound by residues aspartate 8–histidine 10 and histidine 34–serine 35. An a divalent metal cation-binding site is contributed by histidine 42. 4-CDP-2-C-methyl-D-erythritol 2-phosphate is bound by residues aspartate 56–glycine 58, phenylalanine 61–aspartate 65, alanine 100–alanine 106, threonine 132–glutamate 135, phenylalanine 139, and arginine 142.

Belongs to the IspF family. Homotrimer. The cofactor is a divalent metal cation.

It carries out the reaction 4-CDP-2-C-methyl-D-erythritol 2-phosphate = 2-C-methyl-D-erythritol 2,4-cyclic diphosphate + CMP. Its pathway is isoprenoid biosynthesis; isopentenyl diphosphate biosynthesis via DXP pathway; isopentenyl diphosphate from 1-deoxy-D-xylulose 5-phosphate: step 4/6. Involved in the biosynthesis of isopentenyl diphosphate (IPP) and dimethylallyl diphosphate (DMAPP), two major building blocks of isoprenoid compounds. Catalyzes the conversion of 4-diphosphocytidyl-2-C-methyl-D-erythritol 2-phosphate (CDP-ME2P) to 2-C-methyl-D-erythritol 2,4-cyclodiphosphate (ME-CPP) with a corresponding release of cytidine 5-monophosphate (CMP). The polypeptide is 2-C-methyl-D-erythritol 2,4-cyclodiphosphate synthase (Pseudomonas savastanoi pv. phaseolicola (strain 1448A / Race 6) (Pseudomonas syringae pv. phaseolicola (strain 1448A / Race 6))).